Reading from the N-terminus, the 564-residue chain is Phenylalanine--tRNA ligase beta subunit (564 aa).

The 77-residue stretch at 286 to 362 (YFQNSLKINV…IGKGLDNFKS (77 aa)) folds into the B5 domain. Mg(2+) is bound by residues Asp-340, Asp-346, Glu-349, and Glu-350.

Belongs to the phenylalanyl-tRNA synthetase beta subunit family. Type 2 subfamily. As to quaternary structure, tetramer of two alpha and two beta subunits. It depends on Mg(2+) as a cofactor.

It is found in the cytoplasm. It carries out the reaction tRNA(Phe) + L-phenylalanine + ATP = L-phenylalanyl-tRNA(Phe) + AMP + diphosphate + H(+). The polypeptide is Phenylalanine--tRNA ligase beta subunit (Borrelia recurrentis (strain A1)).